We begin with the raw amino-acid sequence, 105 residues long: Thioredoxin (105 aa).

The Thioredoxin domain maps to 2–105 (VKQIDSKDAF…KLEATINEFV (104 aa)). Position 3 is an N6-acetyllysine (lysine 3). Position 8 is an N6-succinyllysine (lysine 8). Residues cysteine 32 and cysteine 35 each act as nucleophile in the active site. Cysteine 32 and cysteine 35 are oxidised to a cystine. Lysine 39 is subject to N6-acetyllysine. 2 positions are modified to S-nitrosocysteine: cysteine 62 and cysteine 69. Position 73 is an S-nitrosocysteine; alternate (cysteine 73). Lysine 94 is subject to N6-acetyllysine; alternate. Lysine 94 carries the post-translational modification N6-succinyllysine; alternate.

Belongs to the thioredoxin family. Homodimer; disulfide-linked. Interacts with TXNIP through the redox-active site. Interacts with MAP3K5 and CASP3. Interacts with APEX1; the interaction stimulates the FOS/JUN AP-1 DNA-binding activity in a redox-dependent manner. In terms of processing, in the fully reduced protein, both Cys-69 and Cys-73 are nitrosylated in response to nitric oxide (NO). When two disulfide bonds are present in the protein, only Cys-73 is nitrosylated. Cys-73 can serve as donor for nitrosylation of target proteins.

Its subcellular location is the nucleus. It is found in the cytoplasm. The protein resides in the secreted. In terms of biological role, participates in various redox reactions through the reversible oxidation of its active center dithiol to a disulfide and catalyzes dithiol-disulfide exchange reactions. Plays a role in the reversible S-nitrosylation of cysteine residues in target proteins, and thereby contributes to the response to intracellular nitric oxide. Nitrosylates the active site Cys of CASP3 in response to nitric oxide (NO), and thereby inhibits caspase-3 activity. Induces the FOS/JUN AP-1 DNA binding activity in ionizing radiation (IR) cells through its oxidation/reduction status and stimulates AP-1 transcriptional activity. The sequence is that of Thioredoxin (TXN) from Callithrix jacchus (White-tufted-ear marmoset).